Reading from the N-terminus, the 168-residue chain is Low molecular weight antigen MTB12 (168 aa).

An N-terminal signal peptide occupies residues 1-22; that stretch reads MKMVKSIAAGLTAAAAIGAAAA. A propeptide spanning residues 23–48 is cleaved from the precursor; the sequence is GVTSIMAGGPVVYQMQPVVFGAPLPL.

The protein belongs to the MTB12 family.

The protein resides in the secreted. May play a role in the development of protective immune responses. This chain is Low molecular weight antigen MTB12 (mtb12), found in Mycobacterium tuberculosis (strain CDC 1551 / Oshkosh).